Reading from the N-terminus, the 362-residue chain is Dihydroorotate dehydrogenase (quinone) (362 aa).

FMN is bound by residues 62-66 (AGYDK) and threonine 86. Residue lysine 66 participates in substrate binding. A substrate-binding site is contributed by 111–115 (NRLGF). FMN-binding residues include asparagine 139 and asparagine 170. Asparagine 170 provides a ligand contact to substrate. Serine 173 (nucleophile) is an active-site residue. A substrate-binding site is contributed by asparagine 175. Positions 215 and 243 each coordinate FMN. A substrate-binding site is contributed by 244-245 (NT). FMN-binding positions include glycine 266, glycine 295, and 316-317 (YS).

Belongs to the dihydroorotate dehydrogenase family. Type 2 subfamily. As to quaternary structure, monomer. FMN is required as a cofactor.

It localises to the cell membrane. The enzyme catalyses (S)-dihydroorotate + a quinone = orotate + a quinol. It participates in pyrimidine metabolism; UMP biosynthesis via de novo pathway; orotate from (S)-dihydroorotate (quinone route): step 1/1. Functionally, catalyzes the conversion of dihydroorotate to orotate with quinone as electron acceptor. In Rhizobium rhizogenes (strain K84 / ATCC BAA-868) (Agrobacterium radiobacter), this protein is Dihydroorotate dehydrogenase (quinone).